An 81-amino-acid chain; its full sequence is UPF0180 protein YkuS (81 aa).

It belongs to the UPF0180 family.

This chain is UPF0180 protein YkuS (ykuS), found in Bacillus subtilis (strain 168).